A 150-amino-acid chain; its full sequence is uncharacterized protein (150 aa).

An N-terminal signal peptide occupies residues 1 to 23 (MYSILIACLVLLLCLIIYVGHRA).

The protein belongs to the asfivirus EP152R family.

It is found in the virion. This is an uncharacterized protein from African swine fever virus (isolate Tick/South Africa/Pretoriuskop Pr4/1996) (ASFV).